A 147-amino-acid polypeptide reads, in one-letter code: Large ribosomal subunit protein uL13 (147 aa).

This sequence belongs to the universal ribosomal protein uL13 family. In terms of assembly, part of the 50S ribosomal subunit.

In terms of biological role, this protein is one of the early assembly proteins of the 50S ribosomal subunit, although it is not seen to bind rRNA by itself. It is important during the early stages of 50S assembly. In Levilactobacillus brevis (strain ATCC 367 / BCRC 12310 / CIP 105137 / JCM 1170 / LMG 11437 / NCIMB 947 / NCTC 947) (Lactobacillus brevis), this protein is Large ribosomal subunit protein uL13.